We begin with the raw amino-acid sequence, 699 residues long: Cysteine--tRNA ligase (699 aa).

A unknown region spans residues 1–226 (MTTITEKRLT…SEQQRLIHNP (226 aa)). Cysteine 254 serves as a coordination point for Zn(2+). Residues 256-266 (MTVYDYCHLGH) carry the 'HIGH' region motif. 3 residues coordinate Zn(2+): cysteine 435, histidine 460, and glutamate 464. Residues 508–512 (KMSKS) carry the 'KMSKS' region motif. Lysine 511 provides a ligand contact to ATP.

Belongs to the class-I aminoacyl-tRNA synthetase family. In terms of assembly, monomer. The cofactor is Zn(2+).

Its subcellular location is the cytoplasm. The enzyme catalyses tRNA(Cys) + L-cysteine + ATP = L-cysteinyl-tRNA(Cys) + AMP + diphosphate. The sequence is that of Cysteine--tRNA ligase (cysS) from Neisseria meningitidis serogroup A / serotype 4A (strain DSM 15465 / Z2491).